We begin with the raw amino-acid sequence, 3799 residues long: Polyketide synthase GfsE (3799 aa).

Residues 33–459 (HEPIAIIGMS…GTNAHAILEE (427 aa)) form the Ketosynthase family 3 (KS3) 1 domain. Module stretches follow at residues 33–1730 (HEPI…RSSA) and 1749–3494 (DEAI…RTDL). Active-site for beta-ketoacyl synthase 1 activity residues include cysteine 206, histidine 341, and histidine 381. The tract at residues 462 to 496 (AATGNPTEADTDQEPAASASPDRTTTLPAVPWPLS) is disordered. Residues 582-895 (FVFPGQGSQW…LGEAHAHGAD (314 aa)) form the Malonyl-CoA:ACP transacylase (MAT) 1 domain. The interval 944–1069 (HPLFGAVVEV…GVLELEARPE (126 aa)) is N-terminal hotdog fold 1. Residues 944 to 1222 (HPLFGAVVEV…SRPVAEEQLG (279 aa)) form the PKS/mFAS DH 1 domain. Residue histidine 976 is the Proton acceptor; for dehydratase activity 1 of the active site. Residues 1081–1222 (AEVVPVEGLY…SRPVAEEQLG (142 aa)) are C-terminal hotdog fold 1. Catalysis depends on aspartate 1142, which acts as the Proton donor; for dehydratase activity 1. Positions 1382–1554 (LLVTGASGVL…TSLSWGLWAE (173 aa)) constitute a Ketoreductase (KR) 1 domain. The 79-residue stretch at 1652-1730 (EAERAVLELV…ALATHIRSSA (79 aa)) folds into the Carrier 1 domain. Serine 1690 bears the O-(pantetheine 4'-phosphoryl)serine mark. Residues 1749-2174 (DEAIAIVGMA…GTNAHVILEQ (426 aa)) form the Ketosynthase family 3 (KS3) 2 domain. Active-site for beta-ketoacyl synthase 2 activity residues include cysteine 1921, histidine 2056, and histidine 2096. The 321-residue stretch at 2284-2604 (FVFPGQGSQW…VSLAKVHTHG (321 aa)) folds into the Malonyl-CoA:ACP transacylase (MAT) 2 domain. An N-terminal hotdog fold 2 region spans residues 2656 to 2781 (HPLLTGVVDL…GTLAVDADHD (126 aa)). Positions 2656–2936 (HPLLTGVVDL…TRPVTAAQFA (281 aa)) constitute a PKS/mFAS DH 2 domain. Catalysis depends on histidine 2688, which acts as the Proton acceptor; for dehydratase activity 2. A C-terminal hotdog fold 2 region spans residues 2794–2936 (ADPVDLTEVY…TRPVTAAQFA (143 aa)). Catalysis depends on aspartate 2855, which acts as the Proton donor; for dehydratase activity 2. One can recognise a Ketoreductase (KR) 2 domain in the interval 3142–3314 (LLVTGASGVL…TALSWGLWAE (173 aa)). Residues 3419–3494 (AALLDLVGAQ…ALAAQLRTDL (76 aa)) enclose the Carrier 2 domain. Position 3454 is an O-(pantetheine 4'-phosphoryl)serine (serine 3454).

Pantetheine 4'-phosphate is required as a cofactor.

It functions in the pathway antibiotic biosynthesis. Its function is as follows. Fifth protein in the synthesis of the 16-membered macrolide antibiotics FD-891 and FD-892. Composed of 2 modules. Modifies the product of GfsD by multiple rounds of addition of methylmalonyl-CoA and other modifications to help generate the final products. The polypeptide is Polyketide synthase GfsE (Streptomyces halstedii).